The primary structure comprises 266 residues: Protein SCO2 homolog, mitochondrial (266 aa).

A mitochondrion-targeting transit peptide spans 1–41; it reads MLLLARPPKAWHRLFQLQPLALLGTPGGKTQHVRYQLFSTP. At 42 to 60 the chain is on the mitochondrial matrix side; the sequence is GPADTGRQGQPQGPGLRTR. A helical transmembrane segment spans residues 61–78; sequence LLVTALVGAGLGGAWLAL. Residues 79–266 are Mitochondrial intermembrane-facing; that stretch reads RAEKERGRQQ…HMAAFRSVLR (188 aa). A Thioredoxin domain is found at 85-259; it reads GRQQQRTEAL…ITDSVRRHMA (175 aa). Cysteine 133, cysteine 137, and histidine 224 together coordinate Cu cation. Cysteine 133 and cysteine 137 form a disulfide bridge.

Belongs to the SCO1/2 family. Homodimer. Interacts with COA6. Found in a complex with TMEM177, COX20, COA6, MT-CO2/COX2, COX18 and SCO1. Interacts with TMEM177 in a COX20-dependent manner. Interacts with COX20 in a MT-CO2/COX2- and COX18-dependent manner. Interacts with COX16.

The protein localises to the mitochondrion inner membrane. Functionally, copper metallochaperone essential for the synthesis and maturation of cytochrome c oxidase subunit II (MT-CO2/COX2) by facilitating the incorporation of copper into the Cu(A) site of MT-CO2/COX2. Could also act as a thiol-disulfide oxidoreductase to regulate the redox state of the cysteines in SCO1 during maturation of MT-CO2/COX2. The chain is Protein SCO2 homolog, mitochondrial (SCO2) from Bos taurus (Bovine).